The primary structure comprises 338 residues: S-adenosylmethionine:tRNA ribosyltransferase-isomerase (338 aa).

Belongs to the QueA family. As to quaternary structure, monomer.

The protein localises to the cytoplasm. It carries out the reaction 7-aminomethyl-7-carbaguanosine(34) in tRNA + S-adenosyl-L-methionine = epoxyqueuosine(34) in tRNA + adenine + L-methionine + 2 H(+). It participates in tRNA modification; tRNA-queuosine biosynthesis. In terms of biological role, transfers and isomerizes the ribose moiety from AdoMet to the 7-aminomethyl group of 7-deazaguanine (preQ1-tRNA) to give epoxyqueuosine (oQ-tRNA). The sequence is that of S-adenosylmethionine:tRNA ribosyltransferase-isomerase from Francisella tularensis subsp. novicida (strain U112).